The sequence spans 1521 residues: MAVISGSDSVLLSNGSISTSTSNPSPLSPSDGDLPAQHLGPRETPRTKASPNGCLQLNGTVKSSFLPLDNQRTPQTPTQCCHPCPYHHPVSSHSNHQECHPEAGLAASPALASCRMQPHSEYSASLCPNHSPVYQAAHCLQPSPSFCLHHPWPDHFQHQPVRQHLTIIRPSRPFKFPRSYAALLADWPVVVLGMCTLLIVVCALVGVLVPELPDFSDPLLGFEPRGTTIGQRLVTWNNMMRNTGYKATLANYPYKYAEEQARSHRDDRWSDDHHERERREVDWNFQKDSFFCDVPSDGYSRVVFASAGGETLWNLPAIKSMCDVDNSRIRSHPQFSDLCQRTTAVSCCPSWTLGNYIAILNNRSSCQKIVERDVSHTLKLLRTCAKHYQNGTLGPDCWDKAARRKDQLKCTNVPRKCTKYNAVYQILHYLVDKDFMTPKTADYAVPALKYSMLFSPTEKGESMMNIYLDNFENWNSSDGITTVTGIEFGIKHSLFQDYLLMDTVYPAIAIAIVLLIMCVYTKSMFITLMTMFAIISSLIVSYFLYRVVFNFEFFPFMNLTALIILVGIGADDAFVLCDVWNYTKFDKPRAETSEAVSVTLQHAALSMFVTSFTTAAAFYANYVSNITAIRCFGVYAGTAILVNYVLMVTWLPAVIVLHERYLLNIFTCFRKPQPQAYDKSCWAVLCQKCRRVLFAVSEASRIFFEKVLPCIVIKFRYLWLIWFLALTVGGAYIVCVNPKMKLPSLELSEFQVFRSSHPFERYDAEFKKLFMFERVHHGEELHMPITVIWGVSPEDSGDPLNPKSKGELTLDSTFNIASPASQAWILHFCQKLRNQTFFHQTEQQDFTSCFIETFKQWMENQDCDEPALYPCCSHCSFPYKQEVFELCIKKAIMELDRSTGYHLNNKTPGPRFDINDTIRAVVLEFQSTFLFTLAYEKMQQFYKEVDSWISHELSSAPEGLSRGWFVSNLEFYDLQDSLSDGTLIAMGLSVAVAFSVMLLTTWNIIISLYAIVSIAGTIFVTVGSLVLLGWELNVLESVTISVAVGLSVDFAVHYGVAYRLAPDPDREGKVIFSLSRMGSAIAMAALTTFVAGAMMMPSTVLAYTQLGTFMMLVMCVSWAFATFFFQCLCRCLGPQGTCGQIPFPTKLQCSPFSHTLSARPGDRGPSKTHAASAYSVDARGQKSQLEHEFYELQPLASHSCTSSEKTTYEEPHTCSEFFNGQAKNLRMPVPAAYSSELTKSPSSEPGSALLQSCLEQDTVCHFSLNPRCNCRDAYTHLQYGLPEIHCQQMGDSLCHKCASTAGGFVQIQSSVAPLKASHQAAEGLLHPAQHMLPPGMQNSRPRNFFLHSVQHFQAQENLGRTSTHSTDERLPRTAELSPPPSDSRSTESFQRACCHPENNQRRLCKSRDPGDTEGSGGTKSKVSGLPNQTDKEEKQVEPSLLQTDETVNSEHLNHNESNFTFSHLPGEAGCRSCPNSPQSCRSIMRSKCGTEDCQTPNLEANVPAVPTHSDLSGESLLIKTL.

Positions 1 to 10 (MAVISGSDSV) are enriched in polar residues. Residues 1-55 (MAVISGSDSVLLSNGSISTSTSNPSPLSPSDGDLPAQHLGPRETPRTKASPNGCL) are disordered. A compositionally biased stretch (low complexity) spans 11–35 (LLSNGSISTSTSNPSPLSPSDGDLP). Residues Asn14 and Asn58 are each glycosylated (N-linked (GlcNAc...) asparagine). Residues 189–209 (VVVLGMCTLLIVVCALVGVLV) form a helical membrane-spanning segment. Asn390 carries an N-linked (GlcNAc...) asparagine glycan. One can recognise an SSD domain in the interval 485 to 657 (GIEFGIKHSL…VTWLPAVIVL (173 aa)). Helical transmembrane passes span 499–519 (LLMD…IMCV), 524–544 (MFIT…SYFL), and 548–568 (VFNF…LVGI). An N-linked (GlcNAc...) asparagine glycan is attached at Asn581. Helical transmembrane passes span 603–623 (AALS…ANYV), 637–657 (GTAI…VIVL), 717–737 (YLWL…VCVN), 986–1006 (MGLS…NIII), 1008–1028 (LYAI…LVLL), 1038–1058 (VTIS…GVAY), 1081–1101 (IAMA…STVL), and 1109–1129 (FMML…QCLC). Polar residues-rich tracts occupy residues 1355–1364 (QENLGRTSTH) and 1418–1428 (TKSKVSGLPNQ). Residues 1355 to 1440 (QENLGRTSTH…KEEKQVEPSL (86 aa)) form a disordered region. Asn1455 carries an N-linked (GlcNAc...) asparagine glycan.

The protein belongs to the dispatched family. Interacts with SHH; via the cholesterol anchor of the dually lipid-modified SHH (ShhNp).

Its subcellular location is the membrane. Functions in hedgehog (Hh) signaling. Regulates the release and extracellular accumulation of cholesterol-modified hedgehog proteins and is hence required for effective production of the Hh signal. Synergizes with SCUBE2 to cause an increase in SHH secretion. In Mus musculus (Mouse), this protein is Protein dispatched homolog 1 (Disp1).